A 334-amino-acid polypeptide reads, in one-letter code: MGGGEVSKEMGACSLAYRRGDQKLRKFVTARSTKFLLFCCIAFVLVTIVCRSSRPWVNSSIAVADRISGSRKGYTLLMNTWKRYDLLKKSVSHYASCSRLDSIHIVWSEPNPPSESLKEYLHNVLKKKTRDGHEVELRFDINKEDSLNNRFKEIKDLKTDAVFSIDDDIIFPCHTVDFAFNVWESAPDTMVGFVPRVHWPEKSNDKANYYTYSGWWSVWWSGTYSMVLSKAAFFHKKYLSLYTNSMPASIREFTTKNRNCEDIAMSFLIANATNAPAIWVKGKIYEIGSTGISSIGGHTEKRTHCVNRFVAEFGKMPLVYTSMKAVDSRNLWFW.

Over 1–26 (MGGGEVSKEMGACSLAYRRGDQKLRK) the chain is Cytoplasmic. A helical; Signal-anchor for type II membrane protein transmembrane segment spans residues 27–49 (FVTARSTKFLLFCCIAFVLVTIV). Topologically, residues 50–334 (CRSSRPWVNS…AVDSRNLWFW (285 aa)) are lumenal. An N-linked (GlcNAc...) asparagine glycan is attached at Asn-58. Substrate contacts are provided by residues 145–150 (DSLNNR), 166–168 (DDD), Arg-196, and 258–262 (RNCED). Residue Asp-168 participates in Mn(2+) binding. Cys-260 and Cys-305 form a disulfide bridge. Asp-262 is a catalytic residue. A glycan (N-linked (GlcNAc...) asparagine) is linked at Asn-271. Substrate-binding positions include 289 to 302 (STGI…TEKR) and 292 to 302 (ISSIGGHTEKR).

It belongs to the glycosyltransferase 64 family. Mn(2+) serves as cofactor. In terms of tissue distribution, expressed in leaves, roots, stem, and flowers.

The protein resides in the golgi apparatus membrane. Its pathway is protein modification; protein glycosylation. The protein operates within sphingolipid metabolism. Functionally, mannosyl transferase (ManT) required for the biosynthesis of mannose-carrying glycosylinositol phosphorylceramides (GIPCs). Maybe involved in cell-cell adhesion that maintains the integrity of organs by providing mechanical strength and facilitating the movement of metabolites throughout the plant during development. Prevents abscisic acid- (ABA-) mediated effects on development (e.g. cell size, flowering time, senescence). Probably implicated in beta-(1,4)-galactan biosynthesis thus being a cell-wall synthesis-related (CWSR) protein. This is Glycosylinositol phosphorylceramide mannosyl transferase 1 from Arabidopsis thaliana (Mouse-ear cress).